A 255-amino-acid chain; its full sequence is MLMVISPAKSLDFTAPDQVLPLTTPELKPQIAELAKVTRKLTAADLRRLMHISEKLAALNHERFQHFDPQVEEGLQAVIAFNGDVYAGLNARELDRPALEWAQDHLRILSGLYGVLRPFDALQAYRLEMGARLKTKRGANLYDFWGETIAKTLNAAGKDHADPTLVNLASQEYFGAVDAKALKLPVVTCHFKEEKGNTLRVLGFFAKKARGRMARFAIDNRIDKAEGLKGFNLDGYEYRADLSTPADWVFARLQP.

The protein belongs to the UPF0246 family.

This is UPF0246 protein Caul_4480 from Caulobacter sp. (strain K31).